The sequence spans 1165 residues: Valine--tRNA ligase (1165 aa).

The short motif at 43-53 (PNVTGSLHMGH) is the 'HIGH' region element. The 'KMSKS' region signature appears at 800 to 804 (KMSKT). Lysine 803 is an ATP binding site. Coiled-coil stretches lie at residues 1001–1032 (KNED…SDLQ) and 1097–1165 (HVDL…VLRS).

Belongs to the class-I aminoacyl-tRNA synthetase family. ValS type 1 subfamily. As to quaternary structure, monomer.

The protein localises to the cytoplasm. The catalysed reaction is tRNA(Val) + L-valine + ATP = L-valyl-tRNA(Val) + AMP + diphosphate. Catalyzes the attachment of valine to tRNA(Val). As ValRS can inadvertently accommodate and process structurally similar amino acids such as threonine, to avoid such errors, it has a 'posttransfer' editing activity that hydrolyzes mischarged Thr-tRNA(Val) in a tRNA-dependent manner. This chain is Valine--tRNA ligase, found in Aquifex aeolicus (strain VF5).